The following is a 1358-amino-acid chain: Probable serine/threonine-protein kinase ifkB (1358 aa).

The Protein kinase domain occupies 1–582; it reads MIGKGGFGVV…TKQLLESGLL (582 aa). ATP-binding positions include 2 to 10 and Lys-25; that span reads IGKGGFGVV. Positions 125–359 are disordered; that stretch reads GANNTAGGGD…SSSRKKPPKE (235 aa). Positions 136–148 are enriched in polar residues; that stretch reads VSNANSNKSMIVG. The span at 149–196 shows a compositional bias: low complexity; sequence NNNKKLTLSSSNTSSSSSLLSNNKSKILNTSKSTSTNTSTSTSTSNTN. Over residues 197–208 the composition is skewed to basic residues; that stretch reads KNKKISKKKKSK. The span at 258-285 shows a compositional bias: low complexity; it reads NNNNDSNNNYHSDNESDSFSGSISMSDG. Residues 306–333 show a composition bias toward acidic residues; it reads DDNENDDDDEEDDDDEYDEEDDDYETFD. Positions 342-351 are enriched in low complexity; sequence SNNSKLSTSS. Asp-413 serves as the catalytic Proton acceptor. 2 disordered regions span residues 445–470 and 1148–1204; these read DDLNSSTSNAANNINLSSSTNSTAQQ and GSGG…QQTS. Residues 447 to 466 are compositionally biased toward low complexity; that stretch reads LNSSTSNAANNINLSSSTNS. Residues 1148 to 1172 are compositionally biased toward gly residues; it reads GSGGSGGSGGGSSMSSGGGGGGNSN. Residues 1185 to 1199 are compositionally biased toward low complexity; that stretch reads SNQSTSSSGNSNNSN.

It belongs to the protein kinase superfamily. Ser/Thr protein kinase family. GCN2 subfamily.

The enzyme catalyses L-seryl-[protein] + ATP = O-phospho-L-seryl-[protein] + ADP + H(+). It catalyses the reaction L-threonyl-[protein] + ATP = O-phospho-L-threonyl-[protein] + ADP + H(+). This is Probable serine/threonine-protein kinase ifkB (ifkB) from Dictyostelium discoideum (Social amoeba).